The sequence spans 93 residues: Large ribosomal subunit protein uL23cz/uL23cy (93 aa).

It belongs to the universal ribosomal protein uL23 family. As to quaternary structure, part of the 50S ribosomal subunit.

The protein resides in the plastid. The protein localises to the chloroplast. In terms of biological role, binds to 23S rRNA. The chain is Large ribosomal subunit protein uL23cz/uL23cy (rpl23-A) from Lotus japonicus (Lotus corniculatus var. japonicus).